The primary structure comprises 307 residues: Ubiquitin recognition factor in ER-associated degradation protein 1 (307 aa).

The residue at position 1 (methionine 1) is an N-acetylmethionine. Residues serine 129, serine 231, serine 245, serine 247, and serine 299 each carry the phosphoserine modification. Disordered regions lie at residues 230–255 and 288–307; these read GSGN…GDIK and GRFI…GRKP.

The protein belongs to the UFD1 family. As to quaternary structure, heterodimer with NPLOC4, this heterodimer binds VCP and inhibits Golgi membrane fusion. Interacts with USP13. Interacts with ZFAND2B; probably through VCP.

The protein localises to the nucleus. It is found in the cytoplasm. Its subcellular location is the cytosol. Its pathway is protein degradation; proteasomal ubiquitin-dependent pathway. Functionally, essential component of the ubiquitin-dependent proteolytic pathway which degrades ubiquitin fusion proteins. The ternary complex containing UFD1, VCP and NPLOC4 binds ubiquitinated proteins and is necessary for the export of misfolded proteins from the ER to the cytoplasm, where they are degraded by the proteasome. The NPLOC4-UFD1-VCP complex regulates spindle disassembly at the end of mitosis and is necessary for the formation of a closed nuclear envelope. It may be involved in the development of some ectoderm-derived structures. Acts as a negative regulator of type I interferon production via the complex formed with VCP and NPLOC4, which binds to RIGI and recruits RNF125 to promote ubiquitination and degradation of RIGI. In Mus musculus (Mouse), this protein is Ubiquitin recognition factor in ER-associated degradation protein 1.